The chain runs to 480 residues: Cytochrome P450 724B1 (480 aa).

Residues 6–26 (LVLAALVILLALLLTLVLSHF) traverse the membrane as a helical segment. Cysteine 426 provides a ligand contact to heme.

Belongs to the cytochrome P450 family. Heme is required as a cofactor. In terms of tissue distribution, ubiquitously expressed at low levels, but preferentially in the internodes and the florets before flowering.

It is found in the membrane. The catalysed reaction is campesterol + reduced [NADPH--hemoprotein reductase] + O2 = (22S)-22-hydroxycampesterol + oxidized [NADPH--hemoprotein reductase] + H2O + H(+). It participates in plant hormone biosynthesis; brassinosteroid biosynthesis. In terms of biological role, involved in brassinosteroid biosynthesis. May catalyze a C6-oxidation step and may be involved to supply 6-deoxotyphasterol and typhasterol. Involved in internode elongation and seed development. Catalyzes the conversion of campesterol (CR) to (22S)-22-hydroxycampesterol (22-OHCR, 22-hydroxyCR). The protein is Cytochrome P450 724B1 of Oryza sativa subsp. japonica (Rice).